Reading from the N-terminus, the 533-residue chain is uncharacterized protein (533 aa).

This is an uncharacterized protein from Clostridium beijerinckii (strain ATCC 51743 / NCIMB 8052) (Clostridium acetobutylicum).